The following is a 461-amino-acid chain: Asparagine--tRNA ligase (461 aa).

This sequence belongs to the class-II aminoacyl-tRNA synthetase family. In terms of assembly, homodimer.

Its subcellular location is the cytoplasm. It catalyses the reaction tRNA(Asn) + L-asparagine + ATP = L-asparaginyl-tRNA(Asn) + AMP + diphosphate + H(+). The polypeptide is Asparagine--tRNA ligase (Nitratidesulfovibrio vulgaris (strain DP4) (Desulfovibrio vulgaris)).